We begin with the raw amino-acid sequence, 103 residues long: Large ribosomal subunit protein bL21 (103 aa).

Belongs to the bacterial ribosomal protein bL21 family. As to quaternary structure, part of the 50S ribosomal subunit. Contacts protein L20.

This protein binds to 23S rRNA in the presence of protein L20. This Mycobacterium marinum (strain ATCC BAA-535 / M) protein is Large ribosomal subunit protein bL21.